The following is a 155-amino-acid chain: Small ribosomal subunit protein uS7c (155 aa).

The protein belongs to the universal ribosomal protein uS7 family. Part of the 30S ribosomal subunit.

It is found in the plastid. The protein resides in the chloroplast. In terms of biological role, one of the primary rRNA binding proteins, it binds directly to 16S rRNA where it nucleates assembly of the head domain of the 30S subunit. The sequence is that of Small ribosomal subunit protein uS7c (rps7) from Canella winterana (Wild cinnamon).